A 1027-amino-acid chain; its full sequence is Circadian locomoter output cycles protein kaput (1027 aa).

The bHLH domain occupies 15–65 (LCRKSRNLSEKKRRDQFNSLVNDLSALISTSSRKMDKSTVLKSTIAFLKNH). PAS domains lie at 88–160 (NDEY…VIEP) and 255–321 (REMS…ELRQ). 5 disordered regions span residues 377 to 402 (RKEGQKSGNSNSITNNGSSKVIASTG), 443 to 575 (TSPA…QQLQ), 765 to 800 (QQMMMQQQQNLHTQHQHNLQQQHQSHSQLQQHTQQQ), 869 to 911 (TINP…NNED), and 926 to 1027 (SINF…GSSQ). Over residues 383-402 (SGNSNSITNNGSSKVIASTG) the composition is skewed to low complexity. A compositionally biased stretch (polar residues) spans 443-486 (TSPAVDSSPMWSASAVQPSGSCQINPLKTSRPASSYGNISSTGI). 2 stretches are compositionally biased toward low complexity: residues 504–516 (SDSTSMSTDSVTS) and 552–575 (QQQQQHQNQQQQHQQHQQLQQQLQ). An implicated in the circadian rhythmicity region spans residues 780–1027 (QHNLQQQHQS…SPHTAPGSSQ (248 aa)). Low complexity-rich tracts occupy residues 871–909 (NPFNSSSNNNNQSYNGGSNLNNGNQNNNNRSSNPPQNNN) and 951–995 (SGSN…NQNQ). Over residues 1006–1027 (QMSQEQSQNLFNSPHTAPGSSQ) the composition is skewed to polar residues.

In terms of assembly, efficient DNA binding requires dimerization with another bHLH protein. Forms a heterodimer with Cycle. Widely expressed. Found in head, body, and appendage fractions.

The protein resides in the nucleus. In terms of biological role, circadian regulator that acts as a transcription factor and generates a rhythmic output with a period of about 24 hours. Oscillates in antiphase to the cycling observed for period (PER) and timeless (TIM). According to PubMed:9742131, reaches peak abundance within several hours of the dark-light transition at ZT0 (zeitgeber 0), whereas PubMed:9616122 describes bimodal oscillating expression with maximum at ZT5 and ZT23. Clock-cycle heterodimers activate cycling transcription of PER and TIM by binding to the E-box (5'-CACGTG-3') present in their promoters. Once induced, Period and Timeless block Clock's ability to transactivate their promoters. This Drosophila melanogaster (Fruit fly) protein is Circadian locomoter output cycles protein kaput (Clk).